A 734-amino-acid polypeptide reads, in one-letter code: PI-PLC X-box domain-containing protein DDB_G0293730 (734 aa).

A coiled-coil region spans residues 8 to 70; it reads IKNILLKIEK…ELNEKLIVEK (63 aa). Residues 440–604 enclose the PI-PLC X-box domain; that stretch reads KLKDRKVRNL…CIYDDLVNPL (165 aa).

This chain is PI-PLC X-box domain-containing protein DDB_G0293730, found in Dictyostelium discoideum (Social amoeba).